The chain runs to 254 residues: Pre-miRNA 5'-monophosphate methyltransferase (254 aa).

The region spanning Glu34–Gln254 is the Bin3-type SAM domain. Residues Arg36, Asn66, Asp99, and Asp124–Ile125 each bind S-adenosyl-L-methionine.

It belongs to the methyltransferase superfamily.

It is found in the cytoplasm. It catalyses the reaction a 5'-end 5'-phospho-ribonucleoside-RNA + S-adenosyl-L-methionine = a 5'-end (5'-methylphospho)-ribonucleoside-RNA + S-adenosyl-L-homocysteine. The enzyme catalyses a 5'-end 5'-phospho-ribonucleoside-RNA + 2 S-adenosyl-L-methionine = a 5'-end (5'-bismethylphospho)-ribonucleoside-RNA + 2 S-adenosyl-L-homocysteine. Functionally, O-methyltransferase that specifically monomethylates 5'-monophosphate of cytoplasmic histidyl tRNA (tRNA(His)), acting as a capping enzyme by protecting tRNA(His) from cleavage by DICER1. Also able, with less efficiently, to methylate the 5' monophosphate of a subset of pre-miRNAs, acting as a negative regulator of miRNA processing. The 5' monophosphate of pre-miRNAs is recognized by DICER1 and is required for pre-miRNAs processing: methylation at this position reduces the processing of pre-miRNAs by DICER1. Was also reported to mediate dimethylation of pre-miR-145; however dimethylation cannot be reproduced by another group which observes a monomethylation of pre-miR-145. This chain is Pre-miRNA 5'-monophosphate methyltransferase (bcdin3d), found in Danio rerio (Zebrafish).